The primary structure comprises 294 residues: Methionine aminopeptidase (294 aa).

Histidine 65 provides a ligand contact to substrate. The a divalent metal cation site is built by aspartate 85, aspartate 96, and histidine 156. Substrate is bound at residue histidine 164. 2 residues coordinate a divalent metal cation: glutamate 189 and glutamate 279.

The protein belongs to the peptidase M24A family. Methionine aminopeptidase archaeal type 2 subfamily. As to quaternary structure, monomer. Requires Co(2+) as cofactor. Zn(2+) is required as a cofactor. It depends on Mn(2+) as a cofactor. The cofactor is Fe(2+).

The catalysed reaction is Release of N-terminal amino acids, preferentially methionine, from peptides and arylamides.. Functionally, removes the N-terminal methionine from nascent proteins. The N-terminal methionine is often cleaved when the second residue in the primary sequence is small and uncharged (Met-Ala-, Cys, Gly, Pro, Ser, Thr, or Val). This is Methionine aminopeptidase from Methanocaldococcus jannaschii (strain ATCC 43067 / DSM 2661 / JAL-1 / JCM 10045 / NBRC 100440) (Methanococcus jannaschii).